The chain runs to 377 residues: TelA-like protein SSP1345 (377 aa).

Over residues 1–18 (MAREQDSINSHPLDKYID) the composition is skewed to basic and acidic residues. The tract at residues 1–39 (MAREQDSINSHPLDKYIDENSANESEIIKSSSQFSHEDQ) is disordered. Residues 20–34 (NSANESEIIKSSSQF) show a composition bias toward polar residues.

It belongs to the TelA family.

The polypeptide is TelA-like protein SSP1345 (Staphylococcus saprophyticus subsp. saprophyticus (strain ATCC 15305 / DSM 20229 / NCIMB 8711 / NCTC 7292 / S-41)).